The primary structure comprises 218 residues: N-(5'-phosphoribosyl)anthranilate isomerase (218 aa).

It belongs to the TrpF family.

It catalyses the reaction N-(5-phospho-beta-D-ribosyl)anthranilate = 1-(2-carboxyphenylamino)-1-deoxy-D-ribulose 5-phosphate. It participates in amino-acid biosynthesis; L-tryptophan biosynthesis; L-tryptophan from chorismate: step 3/5. This Alcanivorax borkumensis (strain ATCC 700651 / DSM 11573 / NCIMB 13689 / SK2) protein is N-(5'-phosphoribosyl)anthranilate isomerase.